A 248-amino-acid chain; its full sequence is Triosephosphate isomerase (248 aa).

Substrate is bound at residue 9 to 11 (NWK). Histidine 101 serves as the catalytic Electrophile. Glutamate 170 acts as the Proton acceptor in catalysis. Residues glycine 176, serine 208, and 229 to 230 (GG) contribute to the substrate site.

It belongs to the triosephosphate isomerase family. In terms of assembly, homodimer.

It is found in the cytoplasm. The enzyme catalyses D-glyceraldehyde 3-phosphate = dihydroxyacetone phosphate. The protein operates within carbohydrate biosynthesis; gluconeogenesis. It functions in the pathway carbohydrate degradation; glycolysis; D-glyceraldehyde 3-phosphate from glycerone phosphate: step 1/1. Functionally, involved in the gluconeogenesis. Catalyzes stereospecifically the conversion of dihydroxyacetone phosphate (DHAP) to D-glyceraldehyde-3-phosphate (G3P). In Mycoplasmopsis pulmonis (strain UAB CTIP) (Mycoplasma pulmonis), this protein is Triosephosphate isomerase.